Here is a 271-residue protein sequence, read N- to C-terminus: Formamidopyrimidine-DNA glycosylase (271 aa).

The Schiff-base intermediate with DNA role is filled by Pro2. Glu3 (proton donor) is an active-site residue. The active-site Proton donor; for beta-elimination activity is the Lys58. 3 residues coordinate DNA: His90, Arg108, and Arg151. Residues 236–271 form an FPG-type; degenerate zinc finger; sequence QVYGRDGQPCHRDDGGTIRRFAQGGRSTWYCPRCQR. Catalysis depends on Arg261, which acts as the Proton donor; for delta-elimination activity.

It belongs to the FPG family. As to quaternary structure, monomer. Zn(2+) serves as cofactor.

The enzyme catalyses Hydrolysis of DNA containing ring-opened 7-methylguanine residues, releasing 2,6-diamino-4-hydroxy-5-(N-methyl)formamidopyrimidine.. It catalyses the reaction 2'-deoxyribonucleotide-(2'-deoxyribose 5'-phosphate)-2'-deoxyribonucleotide-DNA = a 3'-end 2'-deoxyribonucleotide-(2,3-dehydro-2,3-deoxyribose 5'-phosphate)-DNA + a 5'-end 5'-phospho-2'-deoxyribonucleoside-DNA + H(+). In terms of biological role, involved in base excision repair of DNA damaged by oxidation or by mutagenic agents. Acts as a DNA glycosylase that recognizes and removes damaged bases. Has a preference for oxidized purines, such as 7,8-dihydro-8-oxoguanine (8-oxoG). Has AP (apurinic/apyrimidinic) lyase activity and introduces nicks in the DNA strand. Cleaves the DNA backbone by beta-delta elimination to generate a single-strand break at the site of the removed base with both 3'- and 5'-phosphates. The protein is Formamidopyrimidine-DNA glycosylase of Erythrobacter litoralis (strain HTCC2594).